The primary structure comprises 167 residues: NADH-quinone oxidoreductase subunit B (167 aa).

[4Fe-4S] cluster is bound by residues cysteine 40, cysteine 41, cysteine 105, and cysteine 134.

It belongs to the complex I 20 kDa subunit family. As to quaternary structure, NDH-1 is composed of 14 different subunits. Subunits NuoB, C, D, E, F, and G constitute the peripheral sector of the complex. Requires [4Fe-4S] cluster as cofactor.

It is found in the cell inner membrane. The catalysed reaction is a quinone + NADH + 5 H(+)(in) = a quinol + NAD(+) + 4 H(+)(out). Its function is as follows. NDH-1 shuttles electrons from NADH, via FMN and iron-sulfur (Fe-S) centers, to quinones in the respiratory chain. The immediate electron acceptor for the enzyme in this species is believed to be ubiquinone. Couples the redox reaction to proton translocation (for every two electrons transferred, four hydrogen ions are translocated across the cytoplasmic membrane), and thus conserves the redox energy in a proton gradient. This chain is NADH-quinone oxidoreductase subunit B, found in Campylobacter jejuni subsp. jejuni serotype O:2 (strain ATCC 700819 / NCTC 11168).